The primary structure comprises 186 residues: uncharacterized protein (186 aa).

The N-terminal stretch at Met1 to Gly18 is a signal peptide. Cys19 carries the N-palmitoyl cysteine lipid modification. Residue Cys19 is the site of S-diacylglycerol cysteine attachment.

It localises to the cell membrane. This is an uncharacterized protein from Salmonella typhimurium (strain LT2 / SGSC1412 / ATCC 700720).